Here is an 89-residue protein sequence, read N- to C-terminus: Small ribosomal subunit protein bS20 (89 aa).

A disordered region spans residues Met1–Met28.

It belongs to the bacterial ribosomal protein bS20 family.

Binds directly to 16S ribosomal RNA. The chain is Small ribosomal subunit protein bS20 from Koribacter versatilis (strain Ellin345).